A 449-amino-acid chain; its full sequence is Glucose-6-phosphate isomerase (449 aa).

The active-site Proton donor is glutamate 291. Active-site residues include histidine 312 and lysine 426.

It belongs to the GPI family.

It localises to the cytoplasm. The catalysed reaction is alpha-D-glucose 6-phosphate = beta-D-fructose 6-phosphate. Its pathway is carbohydrate biosynthesis; gluconeogenesis. The protein operates within carbohydrate degradation; glycolysis; D-glyceraldehyde 3-phosphate and glycerone phosphate from D-glucose: step 2/4. Its function is as follows. Catalyzes the reversible isomerization of glucose-6-phosphate to fructose-6-phosphate. The polypeptide is Glucose-6-phosphate isomerase (Streptococcus pyogenes serotype M28 (strain MGAS6180)).